We begin with the raw amino-acid sequence, 271 residues long: Protein ABHD14A (271 aa).

The helical; Signal-anchor for type II membrane protein transmembrane segment at 35 to 55 (VALLGLSLLLMLLLYVGLPGP) threads the bilayer. Asn-67 is a glycosylation site (N-linked (GlcNAc...) asparagine). Ser-171 (charge relay system) is an active-site residue. Asn-201 carries an N-linked (GlcNAc...) asparagine glycan. Catalysis depends on charge relay system residues Asp-222 and His-249.

The protein belongs to the AB hydrolase superfamily. ABHD14 family.

The protein localises to the cytoplasm. Its subcellular location is the membrane. Its function is as follows. Possible role in granule neuron development. In Homo sapiens (Human), this protein is Protein ABHD14A.